The primary structure comprises 209 residues: Small ribosomal subunit protein uS4 (209 aa).

Residues Cys9, Cys12, Cys26, and Cys31 each coordinate Zn(2+). The C4-type zinc finger occupies 9 to 31 (CRLCRREGVKLYLKGERCYSPKC). Residues 100–162 (RLDNVVYRLG…RNLELIRQNL (63 aa)) enclose the S4 RNA-binding domain.

This sequence belongs to the universal ribosomal protein uS4 family. In terms of assembly, part of the 30S ribosomal subunit. Contacts protein S5. The interaction surface between S4 and S5 is involved in control of translational fidelity. Requires Zn(2+) as cofactor.

One of the primary rRNA binding proteins, it binds directly to 16S rRNA where it helps nucleate assembly of the body and platform of the 30S subunit. The chain is Small ribosomal subunit protein uS4 (rpsD) from Thermus thermophilus (strain ATCC BAA-163 / DSM 7039 / HB27).